The following is a 228-amino-acid chain: Urease accessory protein UreF 1 (228 aa).

Belongs to the UreF family. As to quaternary structure, ureD, UreF and UreG form a complex that acts as a GTP-hydrolysis-dependent molecular chaperone, activating the urease apoprotein by helping to assemble the nickel containing metallocenter of UreC. The UreE protein probably delivers the nickel.

The protein resides in the cytoplasm. Functionally, required for maturation of urease via the functional incorporation of the urease nickel metallocenter. Its function is as follows. Disruption of the ure1 gene cluster suggests that it protects brucellae during their passage through the stomach. The major route of infection in human brucellosis is oral. In Brucella abortus (strain 2308), this protein is Urease accessory protein UreF 1.